The following is a 1045-amino-acid chain: Desmoglein-1 (1045 aa).

Residues 1 to 23 form the signal peptide; it reads MNWPFFRTAAVLFIFLVVLEVNS. Positions 24-49 are excised as a propeptide; sequence EFRIQVRDYNTKNGTIKWHSIRRQKR. N-linked (GlcNAc...) asparagine glycosylation is found at Asn-36, Asn-110, and Asn-180. Cadherin domains lie at 50-158, 159-270, 271-385, and 386-496; these read EWIK…PVFS, MSTF…PYME, LPSN…GSVF, and RPGS…TDGA. The Extracellular portion of the chain corresponds to 50–546; the sequence is EWIKFAAACR…HPLDNVHFGP (497 aa). A helical membrane pass occupies residues 547-567; sequence AGIGLLIMGFLVLGLVPFLLM. The Cytoplasmic segment spans residues 568–1045; sequence YCDCGGAPGG…TKYSTVQYTK (478 aa). Desmoglein repeat repeat units follow at residues 814–840, 841–870, 871–900, 901–928, and 929–957; these read TYPS…TMTE, SYTT…ERVV, GPIS…ERVI, APNS…ERVI, and RPTS…ERVV. Positions 1019–1045 are disordered; that stretch reads FSNTLGSASPTTTRSRITKYSTVQYTK. The span at 1020 to 1045 shows a compositional bias: polar residues; that stretch reads SNTLGSASPTTTRSRITKYSTVQYTK.

In terms of assembly, binds to JUP/plakoglobin. Interacts with PKP2. Interacts with DSC3; there is evidence to suggest that the interaction promotes cell-cell adhesion of keratinocytes.

The protein localises to the cell membrane. Its subcellular location is the cell junction. It localises to the desmosome. The protein resides in the cytoplasm. It is found in the nucleus. Its function is as follows. Component of intercellular desmosome junctions. Involved in the interaction of plaque proteins and intermediate filaments mediating cell-cell adhesion. This Sus scrofa (Pig) protein is Desmoglein-1 (DSG1).